Consider the following 652-residue polypeptide: MKIHILPIEIINKIAAGEILEKPANAVKELVENAIDAGSTSIKVELEEVGRNLIRVTDNGVGISREDLPLAIEKHATSKLNTKDLYDISYLGFRGEALHSIAITSEMKIASCFNGEGYVIDAQTKEVKPHHIKCGTLVEVRKLFHNIPNKLRFLRSEKTELSSIIELLNRLALVNPNIAFELISNGRQVFDYQTATQLKRMEQLKVLGKEFVENMIHVKHTNDGIFGELFLGLPTLTQKRNNCLIFVNGRPVKDSVISSVMRHAYNDYIPKNTYPIAVIFIRVHNNEVDVNIHPNKSEVKFRDPQVIRRFLLSVSSRSLLQCGRSTSTTVADRAVEQFNQLLKKQTAFRKETVSKTTESGFFQSPKAKKAIDQSQEYAKQFEGKRNLDFDQMQNNNGPFHFSTDQSEEALPLMSHKKTSEDYSNKLPLEKQQSPSIFLHDNRDTSFLQQQLRKINHCEHLQNEKHFETFGKFKCQVHGTFIITETENEMIIIDQHAAHERILYEQMKKSITSPGQNLLTAEFVPLSEKAVEILSFNVEKLKEIGLVVERVSHCAVMVNSLPEAFKNVPTNELIEDIASLLEEEIEPKTLLERIHANIACKRAIKANHNLTREEIEELLTLMEDIPHTGQCNHGRPTHIRLPRKEIEKLFLRS.

This sequence belongs to the DNA mismatch repair MutL/HexB family.

Functionally, this protein is involved in the repair of mismatches in DNA. It is required for dam-dependent methyl-directed DNA mismatch repair. May act as a 'molecular matchmaker', a protein that promotes the formation of a stable complex between two or more DNA-binding proteins in an ATP-dependent manner without itself being part of a final effector complex. In Neorickettsia sennetsu (strain ATCC VR-367 / Miyayama) (Ehrlichia sennetsu), this protein is DNA mismatch repair protein MutL.